The sequence spans 225 residues: Orotate phosphoribosyltransferase (225 aa).

Position 31 (Lys-31) interacts with 5-phospho-alpha-D-ribose 1-diphosphate. 39–40 (FF) lines the orotate pocket. Residues 78–79 (YK), Arg-105, Lys-106, Lys-109, His-111, and 130–138 (DDVLTSGKA) each bind 5-phospho-alpha-D-ribose 1-diphosphate. Orotate contacts are provided by Thr-134 and Arg-163.

This sequence belongs to the purine/pyrimidine phosphoribosyltransferase family. PyrE subfamily. Homodimer.

The catalysed reaction is orotidine 5'-phosphate + diphosphate = orotate + 5-phospho-alpha-D-ribose 1-diphosphate. The protein operates within pyrimidine metabolism; UMP biosynthesis via de novo pathway; UMP from orotate: step 1/2. In terms of biological role, catalyzes the transfer of a ribosyl phosphate group from 5-phosphoribose 1-diphosphate to orotate, leading to the formation of orotidine monophosphate (OMP). The protein is Orotate phosphoribosyltransferase (URA5) of Cryptococcus neoformans var. grubii serotype A (strain H99 / ATCC 208821 / CBS 10515 / FGSC 9487) (Filobasidiella neoformans var. grubii).